A 369-amino-acid polypeptide reads, in one-letter code: uncharacterized protein (369 aa).

N6-(pyridoxal phosphate)lysine is present on Lys184.

It belongs to the class-V pyridoxal-phosphate-dependent aminotransferase family. Pyridoxal 5'-phosphate is required as a cofactor.

This is an uncharacterized protein from Helicobacter pylori (strain J99 / ATCC 700824) (Campylobacter pylori J99).